Consider the following 172-residue polypeptide: S-ribosylhomocysteine lyase (172 aa).

The Fe cation site is built by His54, His58, and Cys128.

It belongs to the LuxS family. In terms of assembly, homodimer. Fe cation serves as cofactor.

The enzyme catalyses S-(5-deoxy-D-ribos-5-yl)-L-homocysteine = (S)-4,5-dihydroxypentane-2,3-dione + L-homocysteine. Its function is as follows. Involved in the synthesis of autoinducer 2 (AI-2) which is secreted by bacteria and is used to communicate both the cell density and the metabolic potential of the environment. The regulation of gene expression in response to changes in cell density is called quorum sensing. Catalyzes the transformation of S-ribosylhomocysteine (RHC) to homocysteine (HC) and 4,5-dihydroxy-2,3-pentadione (DPD). The sequence is that of S-ribosylhomocysteine lyase from Vibrio alginolyticus.